Reading from the N-terminus, the 135-residue chain is uncharacterized protein (135 aa).

Transmembrane regions (helical) follow at residues 7 to 25 (WSAA…EWTI), 29 to 51 (ILLT…TGNI), 64 to 85 (VFIF…EVGI), and 89 to 108 (ALIF…ISIF).

Belongs to the bacteriophage holin family. Cp-1 holin subfamily.

Its subcellular location is the cell membrane. This is an uncharacterized protein from Halalkalibacterium halodurans (strain ATCC BAA-125 / DSM 18197 / FERM 7344 / JCM 9153 / C-125) (Bacillus halodurans).